A 369-amino-acid chain; its full sequence is Peptide chain release factor 2 (369 aa).

Q251 is modified (N5-methylglutamine).

The protein belongs to the prokaryotic/mitochondrial release factor family. In terms of processing, methylated by PrmC. Methylation increases the termination efficiency of RF2.

It is found in the cytoplasm. Its function is as follows. Peptide chain release factor 2 directs the termination of translation in response to the peptide chain termination codons UGA and UAA. This chain is Peptide chain release factor 2, found in Acidothermus cellulolyticus (strain ATCC 43068 / DSM 8971 / 11B).